The primary structure comprises 901 residues: Disease resistance RPP8-like protein 3 (901 aa).

The stretch at 15 to 56 (ALLNRESERLNGIDEQVDGLKRQLRGLQSLLKDADAKKHGSD) forms a coiled coil. The 310-residue stretch at 144-453 (LQDIQREIRQ…AEGIYDGLTI (310 aa)) folds into the NB-ARC domain. ATP-binding positions include 190–197 (GMGGIGKT) and 385–392 (GAQIVGKS). LRR repeat units lie at residues 567 to 591 (LPLL…SIGG), 592 to 615 (LIHL…IRNL), and 833 to 858 (MPCL…KYVT).

The protein belongs to the disease resistance NB-LRR family. RPP8/HRT subfamily.

Disease resistance protein. This Arabidopsis thaliana (Mouse-ear cress) protein is Disease resistance RPP8-like protein 3 (RPP8L3).